The primary structure comprises 556 residues: Phosphomethylpyrimidine synthase (556 aa).

Residues N191, M220, Y249, H285, 305-307 (SRG), 346-349 (DALR), and E385 contribute to the substrate site. H389 is a Zn(2+) binding site. Y412 lines the substrate pocket. H453 provides a ligand contact to Zn(2+). Positions 535, 538, and 543 each coordinate [4Fe-4S] cluster.

This sequence belongs to the ThiC family. Requires [4Fe-4S] cluster as cofactor.

The enzyme catalyses 5-amino-1-(5-phospho-beta-D-ribosyl)imidazole + S-adenosyl-L-methionine = 4-amino-2-methyl-5-(phosphooxymethyl)pyrimidine + CO + 5'-deoxyadenosine + formate + L-methionine + 3 H(+). The protein operates within cofactor biosynthesis; thiamine diphosphate biosynthesis. Its function is as follows. Catalyzes the synthesis of the hydroxymethylpyrimidine phosphate (HMP-P) moiety of thiamine from aminoimidazole ribotide (AIR) in a radical S-adenosyl-L-methionine (SAM)-dependent reaction. This Chlorobaculum tepidum (strain ATCC 49652 / DSM 12025 / NBRC 103806 / TLS) (Chlorobium tepidum) protein is Phosphomethylpyrimidine synthase.